Consider the following 357-residue polypeptide: Probable leucine aminopeptidase ARB_00576 (357 aa).

Positions methionine 1–alanine 15 are cleaved as a signal peptide. Asparagine 76 is a glycosylation site (N-linked (GlcNAc...) asparagine). The Zn(2+) site is built by histidine 167 and aspartate 185. Residues aspartate 169–serine 188 are disordered. The N-linked (GlcNAc...) asparagine glycan is linked to asparagine 186. Zn(2+) is bound by residues glutamate 224 and aspartate 251. Residue asparagine 269 is glycosylated (N-linked (GlcNAc...) asparagine). A disulfide bond links cysteine 291 and cysteine 295. Histidine 324 contacts Zn(2+).

It belongs to the peptidase M28 family. M28E subfamily. As to quaternary structure, monomer. Zn(2+) serves as cofactor.

Its subcellular location is the secreted. Its function is as follows. Probable extracellular aminopeptidase which contributes to pathogenicity. The sequence is that of Probable leucine aminopeptidase ARB_00576 from Arthroderma benhamiae (strain ATCC MYA-4681 / CBS 112371) (Trichophyton mentagrophytes).